We begin with the raw amino-acid sequence, 61 residues long: Sperm protamine P1 (61 aa).

The tract at residues 1 to 61 (MARYRHSRSR…RRYSRRRRRY (61 aa)) is disordered.

This sequence belongs to the protamine P1 family. As to expression, testis.

Its subcellular location is the nucleus. The protein localises to the chromosome. Protamines substitute for histones in the chromatin of sperm during the haploid phase of spermatogenesis. They compact sperm DNA into a highly condensed, stable and inactive complex. In Potorous longipes (Long-footed potoroo), this protein is Sperm protamine P1 (PRM1).